The sequence spans 472 residues: Hepatocyte nuclear factor 3-alpha (472 aa).

Positions 169–260 form a DNA-binding region, fork-head; the sequence is AKPPYSYISL…GNMFENGCYL (92 aa). The disordered stretch occupies residues 269 to 392; sequence EKQPGAGGGG…ESQLHLKGDP (124 aa). Residues 273–289 are compositionally biased toward gly residues; the sequence is GAGGGGGSGSGGSGAKG. Phosphoserine occurs at positions 307 and 331. 2 stretches are compositionally biased toward low complexity: residues 322–332 and 351–366; these read GAPAPGPAASP and TPAS…GPGA.

Binds DNA as a monomer. Interacts with FOXA2. Interacts with NKX2-1. Interacts with HDAC7. Interacts with the histone H3-H4 heterodimer. Associates with nucleosomes containing histone H2A. Interacts with AR. Interacts with NR0B2. Highly expressed in prostate and ESR1-positive breast tumors. Overexpressed in esophageal and lung adenocarcinomas.

Its subcellular location is the nucleus. Its function is as follows. Transcription factor that is involved in embryonic development, establishment of tissue-specific gene expression and regulation of gene expression in differentiated tissues. Is thought to act as a 'pioneer' factor opening the compacted chromatin for other proteins through interactions with nucleosomal core histones and thereby replacing linker histones at target enhancer and/or promoter sites. Binds DNA with the consensus sequence 5'-[AC]A[AT]T[AG]TT[GT][AG][CT]T[CT]-3'. Proposed to play a role in translating the epigenetic signatures into cell type-specific enhancer-driven transcriptional programs. Its differential recruitment to chromatin is dependent on distribution of histone H3 methylated at 'Lys-5' (H3K4me2) in estrogen-regulated genes. Involved in the development of multiple endoderm-derived organ systems such as liver, pancreas, lung and prostate; FOXA1 and FOXA2 seem to have at least in part redundant roles. Modulates the transcriptional activity of nuclear hormone receptors. Is involved in ESR1-mediated transcription; required for ESR1 binding to the NKX2-1 promoter in breast cancer cells; binds to the RPRM promoter and is required for the estrogen-induced repression of RPRM. Involved in regulation of apoptosis by inhibiting the expression of BCL2. Involved in cell cycle regulation by activating expression of CDKN1B, alone or in conjunction with BRCA1. Originally described as a transcription activator for a number of liver genes such as AFP, albumin, tyrosine aminotransferase, PEPCK, etc. Interacts with the cis-acting regulatory regions of these genes. Involved in glucose homeostasis. The chain is Hepatocyte nuclear factor 3-alpha (FOXA1) from Homo sapiens (Human).